A 168-amino-acid chain; its full sequence is MQAPFPKNSANLTHLDGQGQAQMVDVSDKAQTIRQAVAAAQVRMLPATLEAIQAGNTPKGDVLATARLAGIMAAKQTANLIPLCHPLPLQKVAVEITPDPQLPGYQIQATVKTKAETGVEMEALTAVSIAALTLYDMAKALEKSMQIESIRLVSKTGGKSGDYFPPAP.

Substrate is bound by residues 83–85 (LCH) and 121–122 (ME). Asp136 is a catalytic residue.

The protein belongs to the MoaC family. In terms of assembly, homohexamer; trimer of dimers.

The enzyme catalyses (8S)-3',8-cyclo-7,8-dihydroguanosine 5'-triphosphate = cyclic pyranopterin phosphate + diphosphate. The protein operates within cofactor biosynthesis; molybdopterin biosynthesis. In terms of biological role, catalyzes the conversion of (8S)-3',8-cyclo-7,8-dihydroguanosine 5'-triphosphate to cyclic pyranopterin monophosphate (cPMP). The protein is Cyclic pyranopterin monophosphate synthase of Nostoc sp. (strain PCC 7120 / SAG 25.82 / UTEX 2576).